Consider the following 1019-residue polypeptide: DNA topoisomerase 1 (1019 aa).

Residues 1–160 are disordered; sequence MNSIQVKNEP…KTMSITGSGE (160 aa). Residues 46-56 are compositionally biased toward basic and acidic residues; the sequence is KPLAKRPKVED. The span at 62–78 shows a compositional bias: polar residues; it reads PLTSTVSSQNGVQKRSG. 2 stretches are compositionally biased toward acidic residues: residues 83-93 and 107-136; these read DDNDDDSDSDS and SDDD…DDDD. Interaction with DNA stretches follow at residues 379–380, 442–447, and 556–558; these read KY, RAGNEK, and SAK. The Topo IB-type catalytic domain maps to 386–860; the sequence is TSNFKTNSDR…KKVKKEEEEN (475 aa). Residues 716 to 737 form a disordered region; it reads EQKGLTGDDGTPKKGKKAKNVE. Residue tyrosine 822 is the O-(3'-phospho-DNA)-tyrosine intermediate of the active site. Disordered stretches follow at residues 843-890 and 940-1019; these read GQGK…TGDS and MRKL…AAVV. Over residues 854–863 the composition is skewed to basic and acidic residues; sequence KKEEEENDIK. Basic residues predominate over residues 864–879; that stretch reads PKKKDAKGAASKKRAA. Basic and acidic residues-rich tracts occupy residues 940 to 950 and 980 to 996; these read MRKLDSAERKG and TSAD…VDKT. The segment covering 997-1012 has biased composition (acidic residues); sequence EESDDDLSSDSSDDED.

The protein belongs to the type IB topoisomerase family. As to quaternary structure, monomer.

The enzyme catalyses ATP-independent breakage of single-stranded DNA, followed by passage and rejoining.. Its function is as follows. Releases the supercoiling and torsional tension of DNA introduced during the DNA replication and transcription by transiently cleaving and rejoining one strand of the DNA duplex. Introduces a single-strand break via transesterification at a target site in duplex DNA. The scissile phosphodiester is attacked by the catalytic tyrosine of the enzyme, resulting in the formation of a DNA-(3'-phosphotyrosyl)-enzyme intermediate and the expulsion of a 5'-OH DNA strand. The free DNA strand then rotates around the intact phosphodiester bond on the opposing strand, thus removing DNA supercoils. Finally, in the religation step, the DNA 5'-OH attacks the covalent intermediate to expel the active-site tyrosine and restore the DNA phosphodiester backbone. This is DNA topoisomerase 1 (TOP1) from Mycosarcoma maydis (Corn smut fungus).